The following is a 130-amino-acid chain: Small ribosomal subunit protein uS9 (130 aa).

A compositionally biased stretch (basic and acidic residues) spans 99-110 (KKAGFLTRDPRM). The disordered stretch occupies residues 99-130 (KKAGFLTRDPRMKERKKYGLKKARRAPQFSKR). A compositionally biased stretch (basic residues) spans 111–130 (KERKKYGLKKARRAPQFSKR).

The protein belongs to the universal ribosomal protein uS9 family.

This is Small ribosomal subunit protein uS9 from Clostridium botulinum (strain Eklund 17B / Type B).